Here is a 311-residue protein sequence, read N- to C-terminus: tRNA-cytidine(32) 2-sulfurtransferase (311 aa).

Positions 47–52 match the PP-loop motif motif; it reads SGGKDS. Residues C122, C125, and C213 each contribute to the [4Fe-4S] cluster site.

The protein belongs to the TtcA family. In terms of assembly, homodimer. Mg(2+) serves as cofactor. Requires [4Fe-4S] cluster as cofactor.

The protein localises to the cytoplasm. The catalysed reaction is cytidine(32) in tRNA + S-sulfanyl-L-cysteinyl-[cysteine desulfurase] + AH2 + ATP = 2-thiocytidine(32) in tRNA + L-cysteinyl-[cysteine desulfurase] + A + AMP + diphosphate + H(+). It participates in tRNA modification. Functionally, catalyzes the ATP-dependent 2-thiolation of cytidine in position 32 of tRNA, to form 2-thiocytidine (s(2)C32). The sulfur atoms are provided by the cysteine/cysteine desulfurase (IscS) system. The protein is tRNA-cytidine(32) 2-sulfurtransferase of Pectobacterium atrosepticum (strain SCRI 1043 / ATCC BAA-672) (Erwinia carotovora subsp. atroseptica).